Consider the following 352-residue polypeptide: MKKIVFTGGGSAGHVTPNLAIIPYLKEDNWDISYIGSHQGIEKTIIEKEDIPYYSIASGKLRRYFDLKNIKDPFLVMKGVMDAYVRIRKLKPDVIFSKGGFVSVPVVIGGWLNRVPVLLHESDMTPGLANKIALRFASKIFVTFEEAAKHLPKEKVIYTGSPVREEVLKGDREKALAFLGFSRKKPVITIMGGSLGAKKINETVREALPELLRKYQIVHLCGKGNLDDSLQNKEGYRQFEYVHGELPDILAITDFVISRAGSNAIFEFLTLQKPMLLIPLSKFASRGDQILNAESFERQGYASVLYEEDVTVNSLIKHVEELSHNNEAYKTALKKYNGKEAIQTIIHHISEA.

UDP-N-acetyl-alpha-D-glucosamine-binding positions include 11–13, arginine 164, serine 194, and glutamine 289; that span reads SAG.

It belongs to the glycosyltransferase 28 family. MurG subfamily.

The protein localises to the cell membrane. It catalyses the reaction di-trans,octa-cis-undecaprenyl diphospho-N-acetyl-alpha-D-muramoyl-L-alanyl-D-glutamyl-meso-2,6-diaminopimeloyl-D-alanyl-D-alanine + UDP-N-acetyl-alpha-D-glucosamine = di-trans,octa-cis-undecaprenyl diphospho-[N-acetyl-alpha-D-glucosaminyl-(1-&gt;4)]-N-acetyl-alpha-D-muramoyl-L-alanyl-D-glutamyl-meso-2,6-diaminopimeloyl-D-alanyl-D-alanine + UDP + H(+). Its pathway is cell wall biogenesis; peptidoglycan biosynthesis. Its function is as follows. Cell wall formation. Catalyzes the transfer of a GlcNAc subunit on undecaprenyl-pyrophosphoryl-MurNAc-pentapeptide (lipid intermediate I) to form undecaprenyl-pyrophosphoryl-MurNAc-(pentapeptide)GlcNAc (lipid intermediate II). The chain is UDP-N-acetylglucosamine--N-acetylmuramyl-(pentapeptide) pyrophosphoryl-undecaprenol N-acetylglucosamine transferase 2 from Bacillus anthracis.